The following is a 51-amino-acid chain: uncharacterized protein (51 aa).

The tract at residues 1 to 24 (MGGRFSGRVGIEKGGHPPSAADHS) is disordered.

This is an uncharacterized protein from Escherichia coli.